A 599-amino-acid polypeptide reads, in one-letter code: Elongation factor 4 (599 aa).

One can recognise a tr-type G domain in the interval 5 to 187 (SHIRNFSIIA…ELVRLVPPPT (183 aa)). Residues 17 to 22 (DHGKST) and 134 to 137 (NKMD) each bind GTP.

Belongs to the TRAFAC class translation factor GTPase superfamily. Classic translation factor GTPase family. LepA subfamily.

Its subcellular location is the cell inner membrane. It carries out the reaction GTP + H2O = GDP + phosphate + H(+). Functionally, required for accurate and efficient protein synthesis under certain stress conditions. May act as a fidelity factor of the translation reaction, by catalyzing a one-codon backward translocation of tRNAs on improperly translocated ribosomes. Back-translocation proceeds from a post-translocation (POST) complex to a pre-translocation (PRE) complex, thus giving elongation factor G a second chance to translocate the tRNAs correctly. Binds to ribosomes in a GTP-dependent manner. This Cellvibrio japonicus (strain Ueda107) (Pseudomonas fluorescens subsp. cellulosa) protein is Elongation factor 4.